The sequence spans 819 residues: Proteome of basal body protein 15 (819 aa).

Composition is skewed to low complexity over residues 46-59 and 572-581; these read PASS…NPGR and RQQQQQQQHT. Disordered stretches follow at residues 46 to 72 and 564 to 590; these read PASS…LATG and ERQR…GGGV. Positions 546–580 form a coiled coil; the sequence is YVVLREAVARVQARMEQQERQRRLLERQQQQQQQH.

The protein localises to the cytoplasm. The protein resides in the cytoskeleton. It is found in the microtubule organizing center. It localises to the centrosome. Its subcellular location is the centriole. This chain is Proteome of basal body protein 15, found in Chlamydomonas reinhardtii (Chlamydomonas smithii).